We begin with the raw amino-acid sequence, 394 residues long: Flap endonuclease 1 (394 aa).

An N-domain region spans residues 1–104; it reads MGIKQLFTII…GELARRYQRK (104 aa). Aspartate 34 is a Mg(2+) binding site. DNA is bound by residues arginine 47 and arginine 70. Mg(2+) is bound by residues aspartate 86, glutamate 158, glutamate 160, aspartate 179, and aspartate 181. The interval 122-253 is I-domain; sequence DVEKFSRRTV…STALKLIREH (132 aa). A DNA-binding site is contributed by glutamate 158. Positions 231 and 233 each coordinate DNA. Aspartate 233 is a Mg(2+) binding site. The tract at residues 340-348 is interaction with PCNA; that stretch reads QQQRLEGFF. Positions 358-394 are disordered; it reads QKAHKRKLEVKAEEAKKKLKAEKKEKAKAKARPRGTA. Positions 374 to 394 are enriched in basic residues; that stretch reads KKLKAEKKEKAKAKARPRGTA.

Belongs to the XPG/RAD2 endonuclease family. FEN1 subfamily. In terms of assembly, interacts with PCNA. Three molecules of FEN1 bind to one PCNA trimer with each molecule binding to one PCNA monomer. PCNA stimulates the nuclease activity without altering cleavage specificity. Mg(2+) is required as a cofactor. In terms of processing, phosphorylated. Phosphorylation upon DNA damage induces relocalization to the nuclear plasma.

Its subcellular location is the nucleus. It is found in the nucleolus. The protein localises to the nucleoplasm. The protein resides in the mitochondrion. Its function is as follows. Structure-specific nuclease with 5'-flap endonuclease and 5'-3' exonuclease activities involved in DNA replication and repair. During DNA replication, cleaves the 5'-overhanging flap structure that is generated by displacement synthesis when DNA polymerase encounters the 5'-end of a downstream Okazaki fragment. It enters the flap from the 5'-end and then tracks to cleave the flap base, leaving a nick for ligation. Also involved in the long patch base excision repair (LP-BER) pathway, by cleaving within the apurinic/apyrimidinic (AP) site-terminated flap. Acts as a genome stabilization factor that prevents flaps from equilibrating into structures that lead to duplications and deletions. Also possesses 5'-3' exonuclease activity on nicked or gapped double-stranded DNA, and exhibits RNase H activity. Also involved in replication and repair of rDNA and in repairing mitochondrial DNA. In Pyricularia oryzae (strain 70-15 / ATCC MYA-4617 / FGSC 8958) (Rice blast fungus), this protein is Flap endonuclease 1.